Here is a 473-residue protein sequence, read N- to C-terminus: Bifunctional protein HldE (473 aa).

The ribokinase stretch occupies residues 1 to 317 (MKLSMPRFDQ…RRAVQREQGS (317 aa)). 194–197 (NLSE) is a binding site for ATP. Asp-263 is a catalytic residue. The cytidylyltransferase stretch occupies residues 343–473 (FTNGCFDILH…TAIVEKIRQR (131 aa)).

In the N-terminal section; belongs to the carbohydrate kinase PfkB family. The protein in the C-terminal section; belongs to the cytidylyltransferase family. As to quaternary structure, homodimer.

It catalyses the reaction D-glycero-beta-D-manno-heptose 7-phosphate + ATP = D-glycero-beta-D-manno-heptose 1,7-bisphosphate + ADP + H(+). It carries out the reaction D-glycero-beta-D-manno-heptose 1-phosphate + ATP + H(+) = ADP-D-glycero-beta-D-manno-heptose + diphosphate. It functions in the pathway nucleotide-sugar biosynthesis; ADP-L-glycero-beta-D-manno-heptose biosynthesis; ADP-L-glycero-beta-D-manno-heptose from D-glycero-beta-D-manno-heptose 7-phosphate: step 1/4. Its pathway is nucleotide-sugar biosynthesis; ADP-L-glycero-beta-D-manno-heptose biosynthesis; ADP-L-glycero-beta-D-manno-heptose from D-glycero-beta-D-manno-heptose 7-phosphate: step 3/4. In terms of biological role, catalyzes the phosphorylation of D-glycero-D-manno-heptose 7-phosphate at the C-1 position to selectively form D-glycero-beta-D-manno-heptose-1,7-bisphosphate. Catalyzes the ADP transfer from ATP to D-glycero-beta-D-manno-heptose 1-phosphate, yielding ADP-D-glycero-beta-D-manno-heptose. The polypeptide is Bifunctional protein HldE (Pseudomonas aeruginosa (strain LESB58)).